Consider the following 307-residue polypeptide: Ribonuclease Z (307 aa).

The Zn(2+) site is built by H62, H64, D66, H67, H139, D210, and H268. D66 serves as the catalytic Proton acceptor.

The protein belongs to the RNase Z family. As to quaternary structure, homodimer. The cofactor is Zn(2+).

It carries out the reaction Endonucleolytic cleavage of RNA, removing extra 3' nucleotides from tRNA precursor, generating 3' termini of tRNAs. A 3'-hydroxy group is left at the tRNA terminus and a 5'-phosphoryl group is left at the trailer molecule.. Zinc phosphodiesterase, which displays some tRNA 3'-processing endonuclease activity. Probably involved in tRNA maturation, by removing a 3'-trailer from precursor tRNA. This Myxococcus xanthus (strain DK1622) protein is Ribonuclease Z.